The sequence spans 120 residues: ATP-dependent Clp protease adapter protein ClpS (120 aa).

Residues 1 to 25 (MHARSEIRLTFNQDRPQSNEDDGSG) are disordered.

This sequence belongs to the ClpS family. As to quaternary structure, binds to the N-terminal domain of the chaperone ClpA.

Involved in the modulation of the specificity of the ClpAP-mediated ATP-dependent protein degradation. This Pseudomonas putida (strain W619) protein is ATP-dependent Clp protease adapter protein ClpS.